Consider the following 269-residue polypeptide: Formamidopyrimidine-DNA glycosylase (269 aa).

The Schiff-base intermediate with DNA role is filled by proline 2. Catalysis depends on glutamate 3, which acts as the Proton donor. Lysine 57 serves as the catalytic Proton donor; for beta-elimination activity. Histidine 90, arginine 109, and lysine 150 together coordinate DNA. An FPG-type zinc finger spans residues 235–269; the sequence is QVYGRKGEPCRVCGTPIVATKHAQRATFYCRHCQK. Residue arginine 259 is the Proton donor; for delta-elimination activity of the active site.

Belongs to the FPG family. Monomer. Requires Zn(2+) as cofactor.

The catalysed reaction is Hydrolysis of DNA containing ring-opened 7-methylguanine residues, releasing 2,6-diamino-4-hydroxy-5-(N-methyl)formamidopyrimidine.. It catalyses the reaction 2'-deoxyribonucleotide-(2'-deoxyribose 5'-phosphate)-2'-deoxyribonucleotide-DNA = a 3'-end 2'-deoxyribonucleotide-(2,3-dehydro-2,3-deoxyribose 5'-phosphate)-DNA + a 5'-end 5'-phospho-2'-deoxyribonucleoside-DNA + H(+). In terms of biological role, involved in base excision repair of DNA damaged by oxidation or by mutagenic agents. Acts as a DNA glycosylase that recognizes and removes damaged bases. Has a preference for oxidized purines, such as 7,8-dihydro-8-oxoguanine (8-oxoG). Has AP (apurinic/apyrimidinic) lyase activity and introduces nicks in the DNA strand. Cleaves the DNA backbone by beta-delta elimination to generate a single-strand break at the site of the removed base with both 3'- and 5'-phosphates. This is Formamidopyrimidine-DNA glycosylase from Salmonella choleraesuis (strain SC-B67).